Consider the following 624-residue polypeptide: ATP-dependent RNA helicase MRH4, mitochondrial (624 aa).

The transit peptide at M1 to K43 directs the protein to the mitochondrion. Residues R41 to G120 form a disordered region. Residues R86–D119 are compositionally biased toward basic and acidic residues. Positions T151–R184 match the Q motif motif. A Helicase ATP-binding domain is found at E212–L427. A225–T232 serves as a coordination point for ATP. The DEAD box signature appears at D374 to D377. One can recognise a Helicase C-terminal domain in the interval R438–I624.

It belongs to the DEAD box helicase family. MRH4 subfamily.

It is found in the mitochondrion. It carries out the reaction ATP + H2O = ADP + phosphate + H(+). Functionally, ATP-binding RNA helicase involved in mitochondrial RNA metabolism. Required for maintenance of mitochondrial DNA. This Ajellomyces capsulatus (strain NAm1 / WU24) (Darling's disease fungus) protein is ATP-dependent RNA helicase MRH4, mitochondrial (MRH4).